The sequence spans 364 residues: Aminomethyltransferase (364 aa).

The protein belongs to the GcvT family. In terms of assembly, the glycine cleavage system is composed of four proteins: P, T, L and H.

It catalyses the reaction N(6)-[(R)-S(8)-aminomethyldihydrolipoyl]-L-lysyl-[protein] + (6S)-5,6,7,8-tetrahydrofolate = N(6)-[(R)-dihydrolipoyl]-L-lysyl-[protein] + (6R)-5,10-methylene-5,6,7,8-tetrahydrofolate + NH4(+). Functionally, the glycine cleavage system catalyzes the degradation of glycine. The chain is Aminomethyltransferase from Shewanella putrefaciens (strain CN-32 / ATCC BAA-453).